Consider the following 101-residue polypeptide: NAD(P)H-quinone oxidoreductase subunit 4L, chloroplastic (101 aa).

2 consecutive transmembrane segments (helical) span residues 2–22 (MFEHVLVLSVYLFSIGIYGLI) and 61–81 (IFSIFVIAVAAAEAAIGLAIV).

It belongs to the complex I subunit 4L family. As to quaternary structure, NDH is composed of at least 16 different subunits, 5 of which are encoded in the nucleus.

It localises to the plastid. The protein localises to the chloroplast thylakoid membrane. It catalyses the reaction a plastoquinone + NADH + (n+1) H(+)(in) = a plastoquinol + NAD(+) + n H(+)(out). It carries out the reaction a plastoquinone + NADPH + (n+1) H(+)(in) = a plastoquinol + NADP(+) + n H(+)(out). Functionally, NDH shuttles electrons from NAD(P)H:plastoquinone, via FMN and iron-sulfur (Fe-S) centers, to quinones in the photosynthetic chain and possibly in a chloroplast respiratory chain. The immediate electron acceptor for the enzyme in this species is believed to be plastoquinone. Couples the redox reaction to proton translocation, and thus conserves the redox energy in a proton gradient. The sequence is that of NAD(P)H-quinone oxidoreductase subunit 4L, chloroplastic from Dioscorea elephantipes (Elephant's foot yam).